We begin with the raw amino-acid sequence, 151 residues long: Peptide methionine sulfoxide reductase MsrB (151 aa).

A MsrB domain is found at 5 to 127; it reads KEERLKQLTR…NSAALRFVPK (123 aa). C116 acts as the Nucleophile in catalysis.

This sequence belongs to the MsrB Met sulfoxide reductase family.

It catalyses the reaction L-methionyl-[protein] + [thioredoxin]-disulfide + H2O = L-methionyl-(R)-S-oxide-[protein] + [thioredoxin]-dithiol. This is Peptide methionine sulfoxide reductase MsrB from Bacillus licheniformis (strain ATCC 14580 / DSM 13 / JCM 2505 / CCUG 7422 / NBRC 12200 / NCIMB 9375 / NCTC 10341 / NRRL NRS-1264 / Gibson 46).